The following is a 346-amino-acid chain: tRNA N6-adenosine threonylcarbamoyltransferase (346 aa).

Histidine 109, histidine 113, and tyrosine 135 together coordinate Fe cation. Residues 135 to 139 (YVSGG), aspartate 167, glycine 180, glutamate 184, and asparagine 263 each bind substrate. Aspartate 291 is a binding site for Fe cation.

Belongs to the KAE1 / TsaD family. As to quaternary structure, monomer. Component of the KEOPS complex that consists of Kae1, Bud32, Cgi121 and Pcc1; the whole complex dimerizes. It depends on Fe(2+) as a cofactor.

It is found in the cytoplasm. It catalyses the reaction L-threonylcarbamoyladenylate + adenosine(37) in tRNA = N(6)-L-threonylcarbamoyladenosine(37) in tRNA + AMP + H(+). Its function is as follows. Required for the formation of a threonylcarbamoyl group on adenosine at position 37 (t(6)A37) in tRNAs that read codons beginning with adenine. Is a component of the KEOPS complex that is probably involved in the transfer of the threonylcarbamoyl moiety of threonylcarbamoyl-AMP (TC-AMP) to the N6 group of A37. Kae1 likely plays a direct catalytic role in this reaction, but requires other protein(s) of the complex to fulfill this activity. The sequence is that of tRNA N6-adenosine threonylcarbamoyltransferase from Methanopyrus kandleri (strain AV19 / DSM 6324 / JCM 9639 / NBRC 100938).